The primary structure comprises 544 residues: Cytochrome P450 monooxygenase cle2 (544 aa).

The helical transmembrane segment at 19–39 threads the bilayer; sequence LGLLIGLSLILSITWTAYTIL. The segment at 273–305 is disordered; that stretch reads RTQQVEQSIEKNTKNEKKEDEDEDQNEDEETPG. Positions 280 to 290 are enriched in basic and acidic residues; sequence SIEKNTKNEKK. A compositionally biased stretch (acidic residues) spans 291 to 304; that stretch reads EDEDEDQNEDEETP. Cys478 is a binding site for heme.

This sequence belongs to the cytochrome P450 family. The cofactor is heme.

It localises to the membrane. It functions in the pathway secondary metabolite biosynthesis; terpenoid biosynthesis. Cytochrome P450 monooxygenase; part of the cluster A that mediates the biosynthesis of chevalone E and its oxidized derivatives that possess a unique five-membered lactone ring and can synergistically enhance the cytotoxicity of doxorubicin (DOX) in breast cancer cells. Within the pathway, cle2 is involved in hydroxylation of the chavalone E scaffold at position C-20 and contributes with cle4 to the production of seven oxidation derivatives. The molecular scaffold is commonly biosynthesized by a series of enzymes including the non-reducing polyketide synthase (NR-PKS) cle1 that produces the alpha-pyrone triacetic acid lactone (TAL); The membrane-bound prenyltransferase cle5 that accepts TAL as its substrate to perform a C-3 geranylgeranylation reaction, in which the pathway-dedicated GGPS cle6 is required to provide GGPP, the other substrate of cle5; the FAD-dependent monooxygenase Cle3 that forms an (S)-epoxide ring at the terminal olefin of the geranylgeranyl group; and the terpene cyclase Cle7 that catalyzes the cyclization of the prenyl group that yields the pentacyclic pathway intermediate chevalone E. Chevalone E can derivatize into seven new oxidized analogs by the cytochrome P450 monooxygenases cle2 (acting at C-20) and cle4 (acting at C-11 and C-12). In Aspergillus versicolor, this protein is Cytochrome P450 monooxygenase cle2.